The following is a 547-amino-acid chain: Chaperonin GroEL 1 (547 aa).

Residues 30–33, lysine 51, 87–91, glycine 415, and aspartate 495 contribute to the ATP site; these read TLGP and DGTTT.

It belongs to the chaperonin (HSP60) family. As to quaternary structure, forms a cylinder of 14 subunits composed of two heptameric rings stacked back-to-back. Interacts with the co-chaperonin GroES.

It is found in the cytoplasm. It catalyses the reaction ATP + H2O + a folded polypeptide = ADP + phosphate + an unfolded polypeptide.. In terms of biological role, together with its co-chaperonin GroES, plays an essential role in assisting protein folding. The GroEL-GroES system forms a nano-cage that allows encapsulation of the non-native substrate proteins and provides a physical environment optimized to promote and accelerate protein folding. The polypeptide is Chaperonin GroEL 1 (Rhizobium johnstonii (strain DSM 114642 / LMG 32736 / 3841) (Rhizobium leguminosarum bv. viciae)).